The sequence spans 158 residues: 18.2 kDa class I heat shock protein (158 aa).

Residues glutamate 44–glycine 158 form the sHSP domain.

This sequence belongs to the small heat shock protein (HSP20) family. In terms of assembly, forms oligomeric structures.

It localises to the cytoplasm. This Medicago sativa (Alfalfa) protein is 18.2 kDa class I heat shock protein (HSP18.2).